Consider the following 550-residue polypeptide: Parathyroid hormone 2 receptor (550 aa).

Residues 1–24 (MAGLGASLHVWGWLMLGSCLLARA) form the signal peptide. Over 27–145 (DSDGTITIEE…GKQEFFERLY (119 aa)) the chain is Extracellular. Asn-51, Asn-106, Asn-116, and Asn-121 each carry an N-linked (GlcNAc...) asparagine glycan. Residues 146 to 169 (VMYTVGYSISFGSLAVAILIIGYF) form a helical membrane-spanning segment. The Cytoplasmic portion of the chain corresponds to 170-176 (RRLHCTR). A helical membrane pass occupies residues 177–196 (NYIHMHLFVSFMLRATSIFV). Residues 197–237 (KDRVVHAHIGVKELESLIMQDDPQNSIEATSVDKSQYIGCK) lie on the Extracellular side of the membrane. A helical transmembrane segment spans residues 238–260 (IAVVMFIYFLATNYYWILVEGLY). Residues 261-275 (LHNLIFVAFFSDTKY) lie on the Cytoplasmic side of the membrane. Residues 276-297 (LWGFILIGWGFPAAFVAAWAVA) form a helical membrane-spanning segment. The Extracellular segment spans residues 298–316 (RATLADARCWELSAGDIKW). The chain crosses the membrane as a helical span at residues 317–337 (IYQAPILAAIGLNFILFLNTV). At 338-364 (RVLATKIWETNAVGHDTRKQYRKLAKS) the chain is on the cytoplasmic side. A helical transmembrane segment spans residues 365–383 (TLVLVLVFGVHYIVFVCLP). Residues 384–394 (HSFTGLGWEIR) lie on the Extracellular side of the membrane. Residues 395–417 (MHCELFFNSFQGFFVSIIYCYCN) traverse the membrane as a helical segment. Topologically, residues 418-550 (GEVQAEVKKM…GCQGETEDVL (133 aa)) are cytoplasmic. A compositionally biased stretch (basic and acidic residues) spans 511–531 (EETKEDSGRQGDDILMEKPSR). Residues 511-550 (EETKEDSGRQGDDILMEKPSRPMESNPDTEGCQGETEDVL) are disordered.

It belongs to the G-protein coupled receptor 2 family. As to quaternary structure, binds to TIPF39/TIP39. Expressed abundantly in brain and pancreas. Also expressed in the testis.

It localises to the cell membrane. Functionally, this is a specific receptor for parathyroid hormone. The activity of this receptor is mediated by G proteins which activate adenylyl cyclase. PTH2R may be responsible for PTH effects in a number of physiological systems. It may play a significant role in pancreatic function. PTH2R presence in neurons indicates that it may function as a neurotransmitter receptor. This is Parathyroid hormone 2 receptor (PTH2R) from Homo sapiens (Human).